Reading from the N-terminus, the 367-residue chain is MTVYLLAGGGTAGHVNPLLAVADELRAREPGSTILVLGTREGLESRLVPARGYELLTIARLPFPRRPDGAAVRFAPAFARAVGQIRRMIAERGIDVVVGFGGYAAAPAYAAARRPGVPVVVHEANASPGLANRLGARVAAAVGITFPGTALGPRAEVVGMPLRREIATLDRAAVRDAARAELGLDADRPTLLVTGGSTGARSLNRTVVQVAERITATGAQILHIVGGAQEFTDPGVERYHVVGYSDRMELAIAAADLVVSRAGAGALSELTAVGVPAVYVPYPVGNGEQAVNVRGVVAAGGGIVVADADFTPDWVLAHVLPLLSDPAALARMSQAAASVGTRDGAARMADLVRDAVAARPSRPAARR.

Residues 11–13 (TAG), asparagine 125, arginine 163, serine 197, and glutamine 289 each bind UDP-N-acetyl-alpha-D-glucosamine.

Belongs to the glycosyltransferase 28 family. MurG subfamily.

Its subcellular location is the cell membrane. It carries out the reaction di-trans,octa-cis-undecaprenyl diphospho-N-acetyl-alpha-D-muramoyl-L-alanyl-D-glutamyl-meso-2,6-diaminopimeloyl-D-alanyl-D-alanine + UDP-N-acetyl-alpha-D-glucosamine = di-trans,octa-cis-undecaprenyl diphospho-[N-acetyl-alpha-D-glucosaminyl-(1-&gt;4)]-N-acetyl-alpha-D-muramoyl-L-alanyl-D-glutamyl-meso-2,6-diaminopimeloyl-D-alanyl-D-alanine + UDP + H(+). The protein operates within cell wall biogenesis; peptidoglycan biosynthesis. Cell wall formation. Catalyzes the transfer of a GlcNAc subunit on undecaprenyl-pyrophosphoryl-MurNAc-pentapeptide (lipid intermediate I) to form undecaprenyl-pyrophosphoryl-MurNAc-(pentapeptide)GlcNAc (lipid intermediate II). The protein is UDP-N-acetylglucosamine--N-acetylmuramyl-(pentapeptide) pyrophosphoryl-undecaprenol N-acetylglucosamine transferase of Clavibacter michiganensis subsp. michiganensis (strain NCPPB 382).